Here is a 32-residue protein sequence, read N- to C-terminus: Photosystem II reaction center protein T (32 aa).

At Met1 the chain carries N-formylmethionine. Residues 1–2 (ME) lie on the Lumenal side of the membrane. Residues 3–23 (TITYVFIFACIIALFFFAIFF) traverse the membrane as a helical segment. The Cytoplasmic portion of the chain corresponds to 24-32 (REPPRITKK).

This sequence belongs to the PsbT family. PSII is composed of 1 copy each of membrane proteins PsbA, PsbB, PsbC, PsbD, PsbE, PsbF, PsbH, PsbI, PsbJ, PsbK, PsbL, PsbM, PsbT, PsbX, PsbY, PsbZ, Psb30/Ycf12, PsbO, CyanoQ (PsbQ), PsbU, PsbV and a large number of cofactors. It forms dimeric complexes. Part of a photosystem II (PSII) assembly intermediate complex PSII-I; crystallized from a strain deleted of psbJ, it forms monomeric PSII before addition of the oxygen evolving complex. PSII-I includes 3 assembly factors not found in mature PSII (Psb27, Psb28 and Psb34). It depends on PSII binds multiple chlorophylls, carotenoids and specific lipids. as a cofactor.

The protein localises to the cellular thylakoid membrane. Its function is as follows. Found at the monomer-monomer interface of the photosystem II (PS II) dimer, plays a role in assembly and dimerization of PSII. PSII is a light-driven water plastoquinone oxidoreductase, using light energy to abstract electrons from H(2)O, generating a proton gradient subsequently used for ATP formation. The polypeptide is Photosystem II reaction center protein T (Thermosynechococcus vestitus (strain NIES-2133 / IAM M-273 / BP-1)).